The following is a 139-amino-acid chain: uncharacterized protein (139 aa).

This is an uncharacterized protein from Invertebrate iridescent virus 6 (IIV-6).